The sequence spans 437 residues: Trigger factor (437 aa).

A PPIase FKBP-type domain is found at 163–248; that stretch reads GDRVIIDFEG…LNNVSEPTLP (86 aa).

It belongs to the FKBP-type PPIase family. Tig subfamily.

The protein resides in the cytoplasm. The catalysed reaction is [protein]-peptidylproline (omega=180) = [protein]-peptidylproline (omega=0). In terms of biological role, involved in protein export. Acts as a chaperone by maintaining the newly synthesized protein in an open conformation. Functions as a peptidyl-prolyl cis-trans isomerase. This is Trigger factor from Neisseria gonorrhoeae (strain NCCP11945).